A 691-amino-acid polypeptide reads, in one-letter code: MARTTPLERVRNIGIAAHIDAGKTTTTERILFYSGVVHKIGEVHEGTTVTDWMEQERERGITITAAAISTSWRDHQINIIDTPGHVDFTIEVERSMRVLDGVIAVFCSVGGVQPQSETVWRQADRYSVPRIVFVNKMDRTGANFYKVHDQIRDRLRANAVPIQLPIGAEDQFKGIVDLVRMRAKIYKDDLGKEIEDTEIPAEMTELAQEYRTKLIEAVAETDDALMEKYFEGEELTEEEIRAALRKGTIAGTIVPMLCGSAFKNKGVQLLLDAVVDYLPAPIDIPAIKGRLPDGTEVERAADDDQPLAALAFKIMSDPYGRLTFVRVYSGVLKKGSYVLNATKGKKERISRLIVLKADERIEVDELRAGDLGAALGLKETFTGDTLCDESSPVILESLYIPEPVISVAVEPKTKQDMEKLSKALQALSEEDPTFRVSVDPETNQTVIAGMGELHLEILVDRMQREYKVEANIGQPQVAYRETIRKPVRAEGKFIRQSGGKGQYGHVVIEVEPAEPGTGFEFVSKIVGGVVPKEYIPPAEQGMKEACESGILAGYPVIDLKVTLVDGSYHEVDSSEMAFKIAGSIAIKEAVMKANPVLLEPMMKVEVEVPEEFLGTVMGDLIARRGQIEGQTVENGIAKVTAKVPLERMFGYATDIRSNTQGRGIFSMEFSHYEEVPRNVAEAIIAKNKGNA.

Positions 8–282 (ERVRNIGIAA…AVVDYLPAPI (275 aa)) constitute a tr-type G domain. Residues 17 to 24 (AHIDAGKT), 81 to 85 (DTPGH), and 135 to 138 (NKMD) contribute to the GTP site.

The protein belongs to the TRAFAC class translation factor GTPase superfamily. Classic translation factor GTPase family. EF-G/EF-2 subfamily.

It is found in the cytoplasm. In terms of biological role, catalyzes the GTP-dependent ribosomal translocation step during translation elongation. During this step, the ribosome changes from the pre-translocational (PRE) to the post-translocational (POST) state as the newly formed A-site-bound peptidyl-tRNA and P-site-bound deacylated tRNA move to the P and E sites, respectively. Catalyzes the coordinated movement of the two tRNA molecules, the mRNA and conformational changes in the ribosome. This Thermosynechococcus vestitus (strain NIES-2133 / IAM M-273 / BP-1) protein is Elongation factor G.